The following is a 732-amino-acid chain: Lanosterol synthase (732 aa).

An N-acetylthreonine modification is found at Thr2. PFTB repeat units follow at residues 77 to 121 (ALNG…PLPA), 124 to 165 (REEI…RILG), 424 to 468 (PDNP…LLLQ), 483 to 528 (LCDA…MIDY), 560 to 600 (LTQG…ACMG), 612 to 653 (VSRA…HNTC), and 670 to 712 (QERG…NIFP). The active-site Proton donor is Asp455.

This sequence belongs to the terpene cyclase/mutase family. Monomer. As to expression, widely expressed. Expressed in the hair bulb, the outer root sheath and hair matrix of the hair follicle epithelium. Also detected in dermal papilla, epidermis, sweat glands, sebaceous glands, and blood vessels.

It is found in the endoplasmic reticulum membrane. It catalyses the reaction (S)-2,3-epoxysqualene = lanosterol. Its pathway is terpene metabolism; lanosterol biosynthesis; lanosterol from farnesyl diphosphate: step 3/3. Functionally, key enzyme in the cholesterol biosynthesis pathway. Catalyzes the cyclization of (S)-2,3 oxidosqualene to lanosterol, a reaction that forms the sterol nucleus. Through the production of lanosterol may regulate lens protein aggregation and increase transparency. The protein is Lanosterol synthase (LSS) of Homo sapiens (Human).